Here is a 221-residue protein sequence, read N- to C-terminus: Abscisic acid receptor PYL1 (221 aa).

Over residues 1 to 11 (MANSESSSSPV) the composition is skewed to low complexity. The interval 1–22 (MANSESSSSPVNEEENSQRIST) is disordered. Residue alanine 2 is modified to N-acetylalanine. The segment at 50 to 206 (YQLGNGRCSS…NLQKLASITE (157 aa)) is START-like. Abscisate contacts are provided by residues lysine 86, 116 to 121 (ANTSRE), 143 to 149 (RLRNYKS), and glutamate 171. Residues 112–116 (SGLPA) carry the Gate loop motif. Residues 142–144 (HRL) carry the Latch loop motif.

This sequence belongs to the PYR/PYL/RCAR abscisic acid intracellular receptor family. Homodimer. Binds ABA on one subunit only. Interacts with HAB1, ABI1 and ABI2, and possibly with other PP2Cs. Binds to CARs protein in an ABA-independent manner, both at the plasma membrane and in the nucleus. Interacts directly with CAR1 and CAR4.

It is found in the cytoplasm. Its subcellular location is the nucleus. The protein localises to the cell membrane. Its function is as follows. Receptor for abscisic acid (ABA) required for ABA-mediated responses such as stomatal closure and germination inhibition. Inhibits the activity of group-A protein phosphatases type 2C (PP2Cs) when activated by ABA. Can be activated by both (-)-ABA and (+)-ABA. The sequence is that of Abscisic acid receptor PYL1 (PYL1) from Arabidopsis thaliana (Mouse-ear cress).